Consider the following 212-residue polypeptide: Ribonuclease HII (212 aa).

The region spanning 1–204 (MRVGIDEAGR…LRSTAPLYYI (204 aa)) is the RNase H type-2 domain. A divalent metal cation contacts are provided by Asp-6, Glu-7, and Asp-103.

The protein belongs to the RNase HII family. Mn(2+) serves as cofactor. Mg(2+) is required as a cofactor.

The protein localises to the cytoplasm. The enzyme catalyses Endonucleolytic cleavage to 5'-phosphomonoester.. Endonuclease that specifically degrades the RNA of RNA-DNA hybrids. The polypeptide is Ribonuclease HII (Saccharolobus solfataricus (strain ATCC 35092 / DSM 1617 / JCM 11322 / P2) (Sulfolobus solfataricus)).